The sequence spans 1237 residues: Anion exchange protein 2 (1237 aa).

The interval 1–237 (MSSAPRRPAS…SYNLQERRRI (237 aa)) is disordered. Over 1-703 (MSSAPRRPAS…SDFRDALDPQ (703 aa)) the chain is Cytoplasmic. Composition is skewed to basic and acidic residues over residues 37–49 (ELHRTLGVERFEE) and 58–75 (GGEEPGRSYGEEDFEYHR). 2 stretches are compositionally biased toward basic residues: residues 76–85 (QSSHHIHHPL) and 94–110 (RRRKTPQGPGRKPRRRP). Residue Ser113 is modified to Phosphoserine. A compositionally biased stretch (acidic residues) spans 122–133 (EEGEEDEEEANE). Residues 137 to 151 (ARAPTEPSPASTPSS) are compositionally biased toward low complexity. Phosphoserine occurs at positions 144, 170, and 172. A compositionally biased stretch (gly residues) spans 206–215 (TAGGDNGGAS). Position 239 is a phosphoserine (Ser239). Thr253 is subject to Phosphothreonine. Residue Lys270 is modified to N6-methyllysine. The segment at 281–316 (RRHLVRKNAKGSAQSSREGREPGPTPRSRPRAPHKP) is disordered. Ser439 carries the post-translational modification Phosphoserine. A disordered region spans residues 445-464 (SLLGHHHGQGAESDPHVTEP). 4 consecutive transmembrane segments (helical) span residues 704-727 (CVAAVIFIYFAALSPAITFGGLLG), 733-770 (LIGVSELIMSTALQGVIFCLLGAQPLLVIGFSGPLLVF), 790-812 (VWIGFWLVLLALLMVALEGSFLV), and 822-843 (IFAFLISLIFIYETFYKLIKIF). The interval 704-1237 (CVAAVIFIYF…DEYNEMPMPV (534 aa)) is membrane (anion exchange). The Extracellular portion of the chain corresponds to 844-896 (QEHPLHGCSVSNSSETDSSENATWAGAGSTLGPANRSSAGQAGQGRPRGQPNT). 3 N-linked (GlcNAc...) asparagine glycosylation sites follow: Asn855, Asn864, and Asn878. The chain crosses the membrane as a helical span at residues 897-914 (ALLSLVLMAGTFFIAFFL). The Cytoplasmic portion of the chain corresponds to 915–929 (RKFKNSRFFPGRIRR). Transmembrane regions (helical) follow at residues 930–950 (VIGDFGVPIAILIMVLVDYSI), 984–1006 (PFPVWMMVASLLPAILVFILIFM), 1032–1053 (LLLIVAMGGICALFGLPWLAAA), 1087–1132 (VTGL…IQFY), and 1159–1195 (MHLFTALQLLCLALLWAVMSTAASLAFPFILILTVPL). Cys1169 carries S-palmitoyl cysteine lipidation.

This sequence belongs to the anion exchanger (TC 2.A.31) family. As to expression, expressed in the ileum (at protein level).

It localises to the cell membrane. Its subcellular location is the apical cell membrane. The protein resides in the basolateral cell membrane. It carries out the reaction hydrogencarbonate(in) + chloride(out) = hydrogencarbonate(out) + chloride(in). Functionally, sodium-independent anion exchanger which mediates the electroneutral exchange of chloride for bicarbonate ions across the cell membrane. Plays an important role in osteoclast differentiation and function. Regulates bone resorption and calpain-dependent actin cytoskeleton organization in osteoclasts via anion exchange-dependent control of pH. Essential for intracellular pH regulation in CD8(+) T-cells upon CD3 stimulation, modulating CD8(+) T-cell response. This Oryctolagus cuniculus (Rabbit) protein is Anion exchange protein 2 (SLC4A2).